The chain runs to 506 residues: MPPESERKLACLVCRHRKVACDRGRPQCGLCRKNGFDCEYKTREHRPGLRAGYVSQLEKRVEDLERQMEDVLGRLSQSQPSQPATERDDLATTPSTGRLAPPLCVQNVESTNSPQADTAPVETTALTYELQLVWLQKYQPWFPIMHHTSAVKAVAIWDSPGIPWERKQFLSERLRQEVIVNAMGSLHLRTVQALLTLSILFWGEGKWVQYSNLAAMCKRLSQQLGLPTVAGVAAAQPSKMCSLDAVLSDTKIDHEERLRAFWMIEMLDSIFALGLPSYPPTTAAPLGAILPCSDTAWALQDHFGECVPFHDLQYSSGFSMCISLCTVELAPVHQFQHSVIQTGAMAGGPEWQSAAQRLDERLTIWREEFVAAVFRLINAECPHDARAEMRPAVITLLQSQTSLPEGVGQETEPWPYANHRCMYACENMAAKIRRMEESELESCSPCLVLPIFAAARFYIAVAEHRTPALQSALPIEFYDLRYAVAEICHLLQRWVDRYSSPVLRSV.

A DNA-binding region (zn(2)-C6 fungal-type) is located at residues 11–38 (CLVCRHRKVACDRGRPQCGLCRKNGFDC). The interval 73-102 (GRLSQSQPSQPATERDDLATTPSTGRLAPP) is disordered. Residues 75 to 84 (LSQSQPSQPA) are compositionally biased toward polar residues.

It localises to the nucleus. Functionally, transcription factor that probably regulates the expression of the gene cluster that mediates the biosynthesis of notoamide, a fungal indole alkaloid that belongs to a family of natural products containing a characteristic bicyclo[2.2.2]diazaoctane core. This is Notoamide biosynthesis cluster transcriptional coactivator notQ' from Aspergillus versicolor.